Reading from the N-terminus, the 370-residue chain is NSFL1 cofactor p47 (370 aa).

A disordered region spans residues 54 to 73 (SQATPSSVSRGTAPSDNRVT). Phosphoserine is present on residues Ser74, Ser102, and Ser114. Disordered stretches follow at residues 80 to 116 (HDQD…RSPN) and 137 to 157 (VTKS…GYRL). The Nuclear localization signal motif lies at 109–115 (PPRKRSP). Ser140 bears the Phosphoserine; by CDK1 mark. At Tyr167 the chain carries Phosphotyrosine. The Nuclear localization signal signature appears at 172–175 (RRRH). Phosphoserine occurs at positions 176, 192, and 272. In terms of domain architecture, SEP spans 179-244 (DVHVVLKLWK…MEDHRDEDFV (66 aa)). The tract at residues 272–292 (SPAQQAENEAKASSSISIDES) is disordered. A UBX domain is found at 291-368 (ESQPTTNIQI…NLLNAVIVQR (78 aa)).

As to quaternary structure, part of a ternary complex containing STX5A, NSFL1C and VCP. NSFL1C forms a homotrimer that binds to one end of a VCP homohexamer. The complex binds to membranes enriched in phosphatidylethanolamine-containing lipids and promotes Golgi membrane fusion. Interaction with VCIP135 leads to dissociation of the complex via ATP hydrolysis by VCP. Binds ubiquitin and mono-ubiquitinated proteins via its N-terminal UBA-like domain when bound to VCP. Phosphorylated during mitosis. Phosphorylation inhibits interaction with Golgi membranes and is required for the fragmentation of the Golgi stacks during mitosis.

It localises to the nucleus. The protein resides in the golgi apparatus. The protein localises to the golgi stack. It is found in the chromosome. Its subcellular location is the cytoplasm. It localises to the cytoskeleton. The protein resides in the microtubule organizing center. The protein localises to the centrosome. Its function is as follows. Reduces the ATPase activity of VCP. Necessary for the fragmentation of Golgi stacks during mitosis and for VCP-mediated reassembly of Golgi stacks after mitosis. May play a role in VCP-mediated formation of transitional endoplasmic reticulum (tER). Inhibits the activity of CTSL (in vitro). Together with UBXN2B/p37, regulates the centrosomal levels of kinase AURKA/Aurora A during mitotic progression by promoting AURKA removal from centrosomes in prophase. Also, regulates spindle orientation during mitosis. The chain is NSFL1 cofactor p47 (NSFL1C) from Bos taurus (Bovine).